The primary structure comprises 370 residues: GTPase Obg (370 aa).

Residues 1-159 (MKFIDEARIE…RMLKLELKVL (159 aa)) form the Obg domain. Residues 128 to 147 (LHFKSSTNRAPRQKTDGKPG) form a disordered region. Positions 160-334 (ADVGLLGMPN…LCYAIYDYLS (175 aa)) constitute an OBG-type G domain. Residues 166 to 173 (GMPNAGKS), 191 to 195 (FTTLA), 213 to 216 (DIPG), 284 to 287 (NKLD), and 315 to 317 (SAL) each bind GTP. Mg(2+)-binding residues include Ser-173 and Thr-193.

The protein belongs to the TRAFAC class OBG-HflX-like GTPase superfamily. OBG GTPase family. As to quaternary structure, monomer. Requires Mg(2+) as cofactor.

It is found in the cytoplasm. Its function is as follows. An essential GTPase which binds GTP, GDP and possibly (p)ppGpp with moderate affinity, with high nucleotide exchange rates and a fairly low GTP hydrolysis rate. Plays a role in control of the cell cycle, stress response, ribosome biogenesis and in those bacteria that undergo differentiation, in morphogenesis control. The sequence is that of GTPase Obg from Burkholderia orbicola (strain MC0-3).